A 592-amino-acid chain; its full sequence is Arginine--tRNA ligase (592 aa).

The 'HIGH' region motif lies at 112–122; the sequence is VNPNKELHVGH.

The protein belongs to the class-I aminoacyl-tRNA synthetase family. As to quaternary structure, monomer.

The protein resides in the cytoplasm. It carries out the reaction tRNA(Arg) + L-arginine + ATP = L-arginyl-tRNA(Arg) + AMP + diphosphate. This Thermus thermophilus (strain ATCC 27634 / DSM 579 / HB8) protein is Arginine--tRNA ligase.